We begin with the raw amino-acid sequence, 452 residues long: Phosphoglucosamine mutase (452 aa).

Serine 103 functions as the Phosphoserine intermediate in the catalytic mechanism. Mg(2+)-binding residues include serine 103, aspartate 243, aspartate 245, and aspartate 247. Serine 103 carries the post-translational modification Phosphoserine.

It belongs to the phosphohexose mutase family. It depends on Mg(2+) as a cofactor. Activated by phosphorylation.

It carries out the reaction alpha-D-glucosamine 1-phosphate = D-glucosamine 6-phosphate. Its function is as follows. Catalyzes the conversion of glucosamine-6-phosphate to glucosamine-1-phosphate. The protein is Phosphoglucosamine mutase of Limosilactobacillus fermentum (strain NBRC 3956 / LMG 18251) (Lactobacillus fermentum).